The chain runs to 185 residues: Orotate phosphoribosyltransferase (185 aa).

5-phospho-alpha-D-ribose 1-diphosphate is bound by residues Arg-102, Lys-103, Lys-106, His-108, and 128–136 (DDVITTGGS). Residues Thr-132 and Arg-160 each coordinate orotate.

Belongs to the purine/pyrimidine phosphoribosyltransferase family. PyrE subfamily. In terms of assembly, homodimer. Mg(2+) is required as a cofactor.

It carries out the reaction orotidine 5'-phosphate + diphosphate = orotate + 5-phospho-alpha-D-ribose 1-diphosphate. It functions in the pathway pyrimidine metabolism; UMP biosynthesis via de novo pathway; UMP from orotate: step 1/2. In terms of biological role, catalyzes the transfer of a ribosyl phosphate group from 5-phosphoribose 1-diphosphate to orotate, leading to the formation of orotidine monophosphate (OMP). This is Orotate phosphoribosyltransferase from Leptospira biflexa serovar Patoc (strain Patoc 1 / Ames).